An 82-amino-acid chain; its full sequence is Photosystem I iron-sulfur center (82 aa).

2 consecutive 4Fe-4S ferredoxin-type domains span residues 2–31 and 40–69; these read AHTV…MVPW and IAAA…IRVY. [4Fe-4S] cluster contacts are provided by Cys11, Cys14, Cys17, Cys21, Cys49, Cys52, Cys55, and Cys59.

In terms of assembly, the cyanobacterial PSI reaction center is composed of one copy each of PsaA,B,C,D,E,F,I,J,K,L,M and X, and forms trimeric complexes. Requires [4Fe-4S] cluster as cofactor.

Its subcellular location is the cellular thylakoid membrane. It catalyses the reaction reduced [plastocyanin] + hnu + oxidized [2Fe-2S]-[ferredoxin] = oxidized [plastocyanin] + reduced [2Fe-2S]-[ferredoxin]. Apoprotein for the two 4Fe-4S centers FA and FB of photosystem I (PSI); essential for photochemical activity. FB is the terminal electron acceptor of PSI, donating electrons to ferredoxin. The C-terminus interacts with PsaA/B/D and helps assemble the protein into the PSI complex. Required for binding of PsaD and PsaE to PSI. PSI is a plastocyanin/cytochrome c6-ferredoxin oxidoreductase, converting photonic excitation into a charge separation, which transfers an electron from the donor P700 chlorophyll pair to the spectroscopically characterized acceptors A0, A1, FX, FA and FB in turn. This chain is Photosystem I iron-sulfur center, found in Synechococcus sp. (strain JA-3-3Ab) (Cyanobacteria bacterium Yellowstone A-Prime).